The primary structure comprises 68 residues: Large ribosomal subunit protein bL35 (68 aa).

Belongs to the bacterial ribosomal protein bL35 family.

This Persephonella marina (strain DSM 14350 / EX-H1) protein is Large ribosomal subunit protein bL35.